Reading from the N-terminus, the 523-residue chain is Probable FAD synthase (523 aa).

The interval 20-111 (AIVVIGDEIL…TDQLHFSDEI (92 aa)) is molybdenum cofactor biosynthesis protein-like. The segment at 332–489 (QIALSFNGGK…SLGGRDNTVK (158 aa)) is FAD synthase.

This sequence in the N-terminal section; belongs to the MoaB/Mog family. The protein in the C-terminal section; belongs to the PAPS reductase family. FAD1 subfamily. The cofactor is Mg(2+).

It catalyses the reaction FMN + ATP + H(+) = FAD + diphosphate. The protein operates within cofactor biosynthesis; FAD biosynthesis; FAD from FMN: step 1/1. Its function is as follows. Catalyzes the adenylation of flavin mononucleotide (FMN) to form flavin adenine dinucleotide (FAD) coenzyme. The sequence is that of Probable FAD synthase from Caenorhabditis briggsae.